A 321-amino-acid polypeptide reads, in one-letter code: DNA repair and recombination protein RadA (321 aa).

An ATP-binding site is contributed by 111–118 (GEFGSGKT).

The protein belongs to the eukaryotic RecA-like protein family.

Involved in DNA repair and in homologous recombination. Binds and assemble on single-stranded DNA to form a nucleoprotein filament. Hydrolyzes ATP in a ssDNA-dependent manner and promotes DNA strand exchange between homologous DNA molecules. This chain is DNA repair and recombination protein RadA, found in Sulfolobus acidocaldarius (strain ATCC 33909 / DSM 639 / JCM 8929 / NBRC 15157 / NCIMB 11770).